The sequence spans 474 residues: Catalase (474 aa).

Residues H52 and N124 contribute to the active site. Y334 lines the heme pocket.

This sequence belongs to the catalase family. Requires heme as cofactor.

It catalyses the reaction 2 H2O2 = O2 + 2 H2O. In terms of biological role, decomposes hydrogen peroxide into water and oxygen; serves to protect cells from the toxic effects of hydrogen peroxide. This Campylobacter jejuni subsp. jejuni serotype O:2 (strain ATCC 700819 / NCTC 11168) protein is Catalase (katA).